A 296-amino-acid chain; its full sequence is Fructose-bisphosphate aldolase class 1 (296 aa).

The active-site Proton acceptor is Glu175. The active-site Schiff-base intermediate with dihydroxyacetone-P is the Lys212.

The protein belongs to the class I fructose-bisphosphate aldolase family.

The enzyme catalyses beta-D-fructose 1,6-bisphosphate = D-glyceraldehyde 3-phosphate + dihydroxyacetone phosphate. Its pathway is carbohydrate degradation; glycolysis; D-glyceraldehyde 3-phosphate and glycerone phosphate from D-glucose: step 4/4. The sequence is that of Fructose-bisphosphate aldolase class 1 from Staphylococcus aureus (strain MSSA476).